The primary structure comprises 220 residues: Claudin-3 (220 aa).

Topologically, residues 1–8 (MSMGLEIT) are cytoplasmic. Residues 9 to 29 (GTALAVLGWLGTIVCCALPMW) traverse the membrane as a helical segment. The Extracellular segment spans residues 30 to 80 (RVSAFIGSNIITSQNIWEGLWMNCVVQSTGQMQCKVYDSLLALPQDLQAAR). Residues 81-101 (ALIVVAILLAAFGLLVALVGA) form a helical membrane-spanning segment. At 102-115 (QCTNCVQDDTAKAK) the chain is on the cytoplasmic side. A helical transmembrane segment spans residues 116 to 136 (ITIVAGVLFLLAALLTLVPVS). The Extracellular portion of the chain corresponds to 137-159 (WSANTIIRDFYNPVVPEAQKREM). The helical transmembrane segment at 160–180 (GAGLYVGWAAAALQLLGGALL) threads the bilayer. Residues 181–220 (CCSCPPREKKYTATKVVYSAPRSTGPGASLGTGYDRKDYV) lie on the Cytoplasmic side of the membrane. Tyr198 carries the phosphotyrosine modification. Phosphoserine occurs at positions 199 and 209. An interactions with TJP1, TJP2 and TJP3 region spans residues 219–220 (YV).

It belongs to the claudin family. In terms of assembly, can form homo- and heteropolymers with other CLDN. Homopolymers interact with CLDN1 and CLDN2 homopolymers. Interacts in cis (within the same plasma membrane) with CLDN19. Directly interacts with TJP1/ZO-1, TJP2/ZO-2 and TJP3/ZO-3.

It is found in the cell junction. It localises to the tight junction. Its subcellular location is the cell membrane. Its function is as follows. Barrier-forming claudin. Plays a major role in tight junction-specific obliteration of the intercellular space, through calcium-independent cell-adhesion activity. In Homo sapiens (Human), this protein is Claudin-3 (CLDN3).